Reading from the N-terminus, the 79-residue chain is Acyl carrier protein (79 aa).

The region spanning 2-77 is the Carrier domain; that stretch reads SEVADKVKKI…DAVEYIEKQK (76 aa). The residue at position 37 (S37) is an O-(pantetheine 4'-phosphoryl)serine.

Belongs to the acyl carrier protein (ACP) family. Post-translationally, 4'-phosphopantetheine is transferred from CoA to a specific serine of apo-ACP by AcpS. This modification is essential for activity because fatty acids are bound in thioester linkage to the sulfhydryl of the prosthetic group.

It localises to the cytoplasm. It functions in the pathway lipid metabolism; fatty acid biosynthesis. Functionally, carrier of the growing fatty acid chain in fatty acid biosynthesis. The chain is Acyl carrier protein from Granulibacter bethesdensis (strain ATCC BAA-1260 / CGDNIH1).